The chain runs to 140 residues: Putative cell wall protein (140 aa).

The N-terminal stretch at 1–21 (MASSLITSAVIVVVLSLVLGS) is a signal peptide. Residues 85–98 (TGGGIPSYNGGQGA) show a composition bias toward gly residues. Residues 85–140 (TGGGIPSYNGGQGAGPHTQLPGGDDTLVPNPGFEAPTPTIGAGTGSNGQVPPVPLP) are disordered.

Inflorescence.

It is found in the secreted. Its subcellular location is the cell wall. This is Putative cell wall protein from Arabidopsis thaliana (Mouse-ear cress).